The following is a 274-amino-acid chain: Large ribosomal subunit protein uL2cy (274 aa).

2 disordered regions span residues 1–25 (MAIH…VKSN) and 223–274 (MNPV…RRSK). Polar residues predominate over residues 7–25 (KTSTPSTRNGTVDSQVKSN).

Belongs to the universal ribosomal protein uL2 family. Part of the 50S ribosomal subunit.

The protein localises to the plastid. Its subcellular location is the chloroplast. This is Large ribosomal subunit protein uL2cy (rpl2-B) from Atropa belladonna (Belladonna).